A 198-amino-acid polypeptide reads, in one-letter code: Putative nitroreductase MJ1384 (198 aa).

The protein belongs to the nitroreductase family. FMN serves as cofactor.

This chain is Putative nitroreductase MJ1384, found in Methanocaldococcus jannaschii (strain ATCC 43067 / DSM 2661 / JAL-1 / JCM 10045 / NBRC 100440) (Methanococcus jannaschii).